The primary structure comprises 295 residues: N-acetylmuramic acid 6-phosphate etherase (295 aa).

Residues alanine 55–lysine 218 form the SIS domain. Residue glutamate 83 is the Proton donor of the active site. Glutamate 114 is an active-site residue.

The protein belongs to the GCKR-like family. MurNAc-6-P etherase subfamily. As to quaternary structure, homodimer.

It catalyses the reaction N-acetyl-D-muramate 6-phosphate + H2O = N-acetyl-D-glucosamine 6-phosphate + (R)-lactate. The protein operates within amino-sugar metabolism; 1,6-anhydro-N-acetylmuramate degradation. It functions in the pathway amino-sugar metabolism; N-acetylmuramate degradation. Its pathway is cell wall biogenesis; peptidoglycan recycling. Its function is as follows. Specifically catalyzes the cleavage of the D-lactyl ether substituent of MurNAc 6-phosphate, producing GlcNAc 6-phosphate and D-lactate. Together with AnmK, is also required for the utilization of anhydro-N-acetylmuramic acid (anhMurNAc) either imported from the medium or derived from its own cell wall murein, and thus plays a role in cell wall recycling. In Yersinia pseudotuberculosis serotype O:1b (strain IP 31758), this protein is N-acetylmuramic acid 6-phosphate etherase.